Reading from the N-terminus, the 275-residue chain is 4-diphosphocytidyl-2-C-methyl-D-erythritol kinase (275 aa).

Lys-14 is an active-site residue. Position 98–108 (98–108 (PMGAGLGGGSS)) interacts with ATP. Asp-140 is an active-site residue.

The protein belongs to the GHMP kinase family. IspE subfamily.

The catalysed reaction is 4-CDP-2-C-methyl-D-erythritol + ATP = 4-CDP-2-C-methyl-D-erythritol 2-phosphate + ADP + H(+). The protein operates within isoprenoid biosynthesis; isopentenyl diphosphate biosynthesis via DXP pathway; isopentenyl diphosphate from 1-deoxy-D-xylulose 5-phosphate: step 3/6. Its function is as follows. Catalyzes the phosphorylation of the position 2 hydroxy group of 4-diphosphocytidyl-2C-methyl-D-erythritol. This chain is 4-diphosphocytidyl-2-C-methyl-D-erythritol kinase, found in Francisella tularensis subsp. novicida (strain U112).